The chain runs to 699 residues: tRNA 5-methylaminomethyl-2-thiouridine biosynthesis bifunctional protein MnmC (699 aa).

The tRNA (mnm(5)s(2)U34)-methyltransferase stretch occupies residues 1 to 260; it reads MTAKPHISCQ…ERKLLRQQAN (260 aa). The FAD-dependent cmnm(5)s(2)U34 oxidoreductase stretch occupies residues 282-699; the sequence is IGGGLASAHL…LRKLLKGKAL (418 aa).

This sequence in the N-terminal section; belongs to the methyltransferase superfamily. tRNA (mnm(5)s(2)U34)-methyltransferase family. It in the C-terminal section; belongs to the DAO family. The cofactor is FAD.

It localises to the cytoplasm. The catalysed reaction is 5-aminomethyl-2-thiouridine(34) in tRNA + S-adenosyl-L-methionine = 5-methylaminomethyl-2-thiouridine(34) in tRNA + S-adenosyl-L-homocysteine + H(+). Its function is as follows. Catalyzes the last two steps in the biosynthesis of 5-methylaminomethyl-2-thiouridine (mnm(5)s(2)U) at the wobble position (U34) in tRNA. Catalyzes the FAD-dependent demodification of cmnm(5)s(2)U34 to nm(5)s(2)U34, followed by the transfer of a methyl group from S-adenosyl-L-methionine to nm(5)s(2)U34, to form mnm(5)s(2)U34. The chain is tRNA 5-methylaminomethyl-2-thiouridine biosynthesis bifunctional protein MnmC from Shewanella oneidensis (strain ATCC 700550 / JCM 31522 / CIP 106686 / LMG 19005 / NCIMB 14063 / MR-1).